A 70-amino-acid polypeptide reads, in one-letter code: Conotoxin Im23.3 (70 aa).

Positions 1 to 22 are cleaved as a signal peptide; the sequence is MIMRMTLTLFVLVVMTAASASG. Positions 23 to 28 are excised as a propeptide; sequence DALTEA. 3 cysteine pairs are disulfide-bonded: C34-C41, C45-C53, and C54-C69.

Belongs to the conotoxin K superfamily. Expressed by the venom duct.

It localises to the secreted. In terms of biological role, neurotoxin that induces excitatory symptoms in mice following intracranial administration. No symptoms are observed after intraperitoneal and intravenous (tail vein) injections. This Conus imperialis (Imperial cone) protein is Conotoxin Im23.3.